The following is a 147-amino-acid chain: UPF0306 protein YhbP (147 aa).

It belongs to the UPF0306 family.

The chain is UPF0306 protein YhbP from Shigella sonnei (strain Ss046).